A 133-amino-acid polypeptide reads, in one-letter code: ATP synthase epsilon chain, chloroplastic (133 aa).

Belongs to the ATPase epsilon chain family. F-type ATPases have 2 components, CF(1) - the catalytic core - and CF(0) - the membrane proton channel. CF(1) has five subunits: alpha(3), beta(3), gamma(1), delta(1), epsilon(1). CF(0) has three main subunits: a, b and c.

It localises to the plastid. The protein resides in the chloroplast thylakoid membrane. Functionally, produces ATP from ADP in the presence of a proton gradient across the membrane. The protein is ATP synthase epsilon chain, chloroplastic of Zygnema circumcarinatum (Green alga).